Reading from the N-terminus, the 517-residue chain is Maturase K (517 aa).

It belongs to the intron maturase 2 family. MatK subfamily.

Its subcellular location is the plastid. The protein localises to the chloroplast. In terms of biological role, usually encoded in the trnK tRNA gene intron. Probably assists in splicing its own and other chloroplast group II introns. This is Maturase K from Veronica arvensis (Wall speedwell).